Reading from the N-terminus, the 353-residue chain is Suppressor of RNA-mediated gene silencing (353 aa).

Belongs to the phytoreovirus non-structural protein 10 family.

Suppressor of RNA-mediated gene silencing, also known as post-transcriptional gene silencing (PTGS), a mechanism of plant viral defense that limits the accumulation of viral RNAs. The chain is Suppressor of RNA-mediated gene silencing from Alopecurus aequalis (Barnyard grass).